Consider the following 358-residue polypeptide: UDP-3-O-acylglucosamine N-acyltransferase (358 aa).

Residue H248 is the Proton acceptor of the active site.

This sequence belongs to the transferase hexapeptide repeat family. LpxD subfamily. In terms of assembly, homotrimer.

It carries out the reaction a UDP-3-O-[(3R)-3-hydroxyacyl]-alpha-D-glucosamine + a (3R)-hydroxyacyl-[ACP] = a UDP-2-N,3-O-bis[(3R)-3-hydroxyacyl]-alpha-D-glucosamine + holo-[ACP] + H(+). It participates in bacterial outer membrane biogenesis; LPS lipid A biosynthesis. Its function is as follows. Catalyzes the N-acylation of UDP-3-O-acylglucosamine using 3-hydroxyacyl-ACP as the acyl donor. Is involved in the biosynthesis of lipid A, a phosphorylated glycolipid that anchors the lipopolysaccharide to the outer membrane of the cell. The polypeptide is UDP-3-O-acylglucosamine N-acyltransferase (Synechococcus sp. (strain WH7803)).